The sequence spans 487 residues: Cysteine--tRNA ligase (487 aa).

Cys-29 is a binding site for Zn(2+). Positions 31–41 (VTVYDYNHVGH) match the 'HIGH' region motif. Residues Cys-209, His-234, and Glu-238 each coordinate Zn(2+). A 'KMSKS' region motif is present at residues 266–270 (KMSKS). Lys-269 is a binding site for ATP.

This sequence belongs to the class-I aminoacyl-tRNA synthetase family. As to quaternary structure, monomer. Requires Zn(2+) as cofactor.

The protein resides in the cytoplasm. It catalyses the reaction tRNA(Cys) + L-cysteine + ATP = L-cysteinyl-tRNA(Cys) + AMP + diphosphate. In Sulfurihydrogenibium sp. (strain YO3AOP1), this protein is Cysteine--tRNA ligase.